A 697-amino-acid chain; its full sequence is Hormonally up-regulated neu tumor-associated kinase homolog (697 aa).

Residues 55 to 313 (YLIGRKLGEG…IQQALANRWL (259 aa)) enclose the Protein kinase domain. Residues 61-69 (LGEGSFAKV) and Lys-84 contribute to the ATP site. The active-site Proton acceptor is Asp-179. Basic and acidic residues-rich tracts occupy residues 405 to 424 (KMNKNSYEERRSKDLEKRGE) and 460 to 473 (PVKERRSSKSERES). Disordered stretches follow at residues 405-480 (KMNK…LSPF) and 586-642 (DNTS…NCVR). Residues 586-600 (DNTSPIKGHSNQASF) show a composition bias toward polar residues. Over residues 607 to 626 (SPSSPESMSPTSPHSPHSPS) the composition is skewed to low complexity. Polar residues predominate over residues 627–637 (CNNNISGNLGS).

Belongs to the protein kinase superfamily. CAMK Ser/Thr protein kinase family. SNF1 subfamily.

It carries out the reaction L-seryl-[protein] + ATP = O-phospho-L-seryl-[protein] + ADP + H(+). The enzyme catalyses L-threonyl-[protein] + ATP = O-phospho-L-threonyl-[protein] + ADP + H(+). In Xenopus tropicalis (Western clawed frog), this protein is Hormonally up-regulated neu tumor-associated kinase homolog (hunk).